Consider the following 570-residue polypeptide: Glycine--tRNA ligase (570 aa).

The substrate site is built by Arg99 and Glu165. Residues 197–199 (RNE), 207–212 (LRLREF), 324–325 (EC), and 443–446 (GIDR) each bind ATP. Residue 212–216 (FTQAE) coordinates substrate. 439–443 (EPSFG) is a binding site for substrate.

The protein belongs to the class-II aminoacyl-tRNA synthetase family.

It is found in the cytoplasm. It catalyses the reaction tRNA(Gly) + glycine + ATP = glycyl-tRNA(Gly) + AMP + diphosphate. In terms of biological role, catalyzes the attachment of glycine to tRNA(Gly). In Thermococcus gammatolerans (strain DSM 15229 / JCM 11827 / EJ3), this protein is Glycine--tRNA ligase.